The sequence spans 502 residues: Cytochrome P450 71B20 (502 aa).

A helical membrane pass occupies residues 1-21 (MAISFLCFCLITLASLIFFAK). C444 serves as a coordination point for heme.

It belongs to the cytochrome P450 family. It depends on heme as a cofactor.

The protein resides in the membrane. The polypeptide is Cytochrome P450 71B20 (CYP71B20) (Arabidopsis thaliana (Mouse-ear cress)).